A 118-amino-acid chain; its full sequence is V-type proton ATPase subunit G 2 (118 aa).

Positions 23-91 (ADARKRKARR…QGMQSSQQRN (69 aa)) are disordered. Residues 35-55 (QAKEEAQMEVEQYRREREQEF) show a composition bias toward basic and acidic residues. Composition is skewed to polar residues over residues 56-69 (QSKQQAAMGSQGNL) and 78-89 (RRQVQGMQSSQQ).

The protein belongs to the V-ATPase G subunit family. As to quaternary structure, V-ATPase is a heteromultimeric enzyme made up of two complexes: the ATP-hydrolytic V1 complex and the proton translocation V0 complex. The V1 complex consists of three catalytic AB heterodimers that form a heterohexamer, three peripheral stalks each consisting of EG heterodimers, one central rotor including subunits D and F, and the regulatory subunits C and H. The proton translocation complex V0 consists of the proton transport subunit a, a ring of proteolipid subunits c9c'', rotary subunit d, subunits e and f, and the accessory subunits ATP6AP1/Ac45 and ATP6AP2/PRR.

The protein localises to the melanosome. Its subcellular location is the cytoplasmic vesicle. It is found in the clathrin-coated vesicle membrane. In terms of biological role, subunit of the V1 complex of vacuolar(H+)-ATPase (V-ATPase), a multisubunit enzyme composed of a peripheral complex (V1) that hydrolyzes ATP and a membrane integral complex (V0) that translocates protons. V-ATPase is responsible for acidifying and maintaining the pH of intracellular compartments and in some cell types, is targeted to the plasma membrane, where it is responsible for acidifying the extracellular environment. This is V-type proton ATPase subunit G 2 (Atp6v1g2) from Mus musculus (Mouse).